A 502-amino-acid polypeptide reads, in one-letter code: Glutamate--tRNA ligase (502 aa).

A 'HIGH' region motif is present at residues 9–19; it reads PSPTGFPHVGT. The short motif at 250–254 is the 'KMSKS' region element; that stretch reads KLSKR. K253 lines the ATP pocket.

The protein belongs to the class-I aminoacyl-tRNA synthetase family. Glutamate--tRNA ligase type 1 subfamily. As to quaternary structure, monomer.

The protein resides in the cytoplasm. The enzyme catalyses tRNA(Glu) + L-glutamate + ATP = L-glutamyl-tRNA(Glu) + AMP + diphosphate. In terms of biological role, catalyzes the attachment of glutamate to tRNA(Glu) in a two-step reaction: glutamate is first activated by ATP to form Glu-AMP and then transferred to the acceptor end of tRNA(Glu). This Acinetobacter baylyi (strain ATCC 33305 / BD413 / ADP1) protein is Glutamate--tRNA ligase.